A 316-amino-acid chain; its full sequence is Thymidylate synthase (316 aa).

DUMP is bound by residues arginine 23 and 178–179 (RR). Cysteine 198 serves as the catalytic Nucleophile. DUMP contacts are provided by residues 218–221 (RSAD), asparagine 229, and 259–261 (HIY). Aspartate 221 lines the (6R)-5,10-methylene-5,6,7,8-tetrahydrofolate pocket. Alanine 315 is a (6R)-5,10-methylene-5,6,7,8-tetrahydrofolate binding site.

The protein belongs to the thymidylate synthase family. Bacterial-type ThyA subfamily. In terms of assembly, homodimer.

The protein resides in the cytoplasm. It catalyses the reaction dUMP + (6R)-5,10-methylene-5,6,7,8-tetrahydrofolate = 7,8-dihydrofolate + dTMP. It functions in the pathway pyrimidine metabolism; dTTP biosynthesis. Catalyzes the reductive methylation of 2'-deoxyuridine-5'-monophosphate (dUMP) to 2'-deoxythymidine-5'-monophosphate (dTMP) while utilizing 5,10-methylenetetrahydrofolate (mTHF) as the methyl donor and reductant in the reaction, yielding dihydrofolate (DHF) as a by-product. This enzymatic reaction provides an intracellular de novo source of dTMP, an essential precursor for DNA biosynthesis. In Levilactobacillus brevis (strain ATCC 367 / BCRC 12310 / CIP 105137 / JCM 1170 / LMG 11437 / NCIMB 947 / NCTC 947) (Lactobacillus brevis), this protein is Thymidylate synthase.